Consider the following 2812-residue polypeptide: Polyunsaturated fatty acid synthase subunit A (2812 aa).

The Ketosynthase family 3 (KS3) domain occupies aspartate 12–glutamate 472. Residues cysteine 213, histidine 348, and histidine 390 each act as for beta-ketoacyl synthase activity in the active site. The Malonyl-CoA:ACP transacylase (MAT) domain occupies leucine 602 to lysine 913. Residues aspartate 1000 to serine 1048 adopt a coiled-coil conformation. Carrier domains lie at alanine 1114–isoleucine 1193, glutamate 1232–isoleucine 1308, and alanine 1342–isoleucine 1418. Residues serine 1152, serine 1267, and serine 1377 each carry the O-(pantetheine 4'-phosphoryl)serine modification. The segment at serine 1422–alanine 1442 is disordered. Residues alanine 1423–alanine 1442 show a composition bias toward low complexity. Residues alanine 1455 to isoleucine 1531 enclose the Carrier 4 domain. Serine 1490 carries the post-translational modification O-(pantetheine 4'-phosphoryl)serine. The segment at serine 1535 to alanine 1555 is disordered. The segment covering alanine 1536–alanine 1555 has biased composition (low complexity). Carrier domains lie at alanine 1568–isoleucine 1644, alanine 1681–isoleucine 1757, alanine 1792–isoleucine 1868, and alanine 1903–isoleucine 1979. Serine 1603, serine 1716, serine 1827, and serine 1938 each carry O-(pantetheine 4'-phosphoryl)serine. The 228-residue stretch at valine 2257 to aspartate 2484 folds into the Ketoreductase (KR) domain. The N-terminal hotdog fold stretch occupies residues glutamate 2524–glycine 2651. Residues glutamate 2524 to phenylalanine 2812 form the PKS/mFAS DH domain. Residues glutamate 2540–valine 2800 are dehydratase (DH) domain. Histidine 2559 serves as the catalytic Proton acceptor; for dehydratase activity. Residues alanine 2666–phenylalanine 2812 are C-terminal hotdog fold. Residue aspartate 2730 is the Proton donor; for dehydratase activity of the active site.

In terms of assembly, component of the polyunsaturated fatty acid synthase complex composed of at least ORF-A, ORF-B and ORF-C. Requires pantetheine 4'-phosphate as cofactor.

The protein operates within lipid metabolism; fatty acid biosynthesis. In terms of biological role, poliketide synthase-like protein; part of the polyunsaturated fatty acid synthase composed of the 3 PKS-like subunits A, B and C. While the saturated fatty acids (SFAs) in Thraustochytrium are produced by the conventional fatty acid synthase (FAS) pathway, polyunsaturated fatty acids (PUFAs) including docosahexeanoic acid (DHA) and docosapentaenoic acid (DPA) are synthesized via an anaerobical PKS pathway. PUFA synthase assimilates fatty acyl-CoA, the product of FAS, as the starter unit to synthesize DPA, and this starter unit may be butyryl-CoA, hexanoyl-CoA, or octanoyl-CoA. DPA and DHA biosynthesis seem to differ by the reduction at the N-3 position by PUFA synthase, not the extension of carbon chain. In DHA biosynthesis, PUFA synthase extends the fatty acyl chain from the methyl toward the carboxyl end, and the double bond is formed when the carbon chain is growing, instead of afterward. Therefore, PUFA synthase is unable to transform DPA to DHA, suggesting that DPA is not the precursor of DHA. Moreover, DPA molecule is partly extended by FAS KS domain, so DPA biosynthesis is less dependent on PUFA synthase KS domain than DHA. The chain is Polyunsaturated fatty acid synthase subunit A from Thraustochytrium sp. (strain ATCC 26185 / S-3).